The chain runs to 214 residues: Redox-sensing transcriptional repressor Rex (214 aa).

The H-T-H motif DNA-binding region spans 16 to 55; that stretch reads LYYRYLIFLNDEGKEKVSSTELAEAVQVDSASIRRDFSYF. Residue 90-95 participates in NAD(+) binding; the sequence is GVGNMG.

This sequence belongs to the transcriptional regulatory Rex family. Homodimer.

It is found in the cytoplasm. In terms of biological role, modulates transcription in response to changes in cellular NADH/NAD(+) redox state. The polypeptide is Redox-sensing transcriptional repressor Rex (Lactobacillus gasseri (strain ATCC 33323 / DSM 20243 / BCRC 14619 / CIP 102991 / JCM 1131 / KCTC 3163 / NCIMB 11718 / NCTC 13722 / AM63)).